A 264-amino-acid polypeptide reads, in one-letter code: Apolipoprotein A-I (264 aa).

A signal peptide spans 1 to 18; the sequence is MKAVVLAVAVLFLTGSQA. 2 repeat units span residues 67–88 and 89–110. Residues 67-264 are 10 X approximate tandem repeats; that stretch reads LNLLANWNTL…DQASKQLSAQ (198 aa). Methionine 109 is subject to Methionine sulfoxide. A 3; half-length repeat occupies 111–121; sequence KDLEEVKQKVQ. 5 tandem repeats follow at residues 122–142, 144–165, 166–187, 188–208, and 209–229. At methionine 193 the chain carries Methionine sulfoxide. Residues 230–240 form a 9; half-length repeat; that stretch reads PALEDLRQGLM. Methionine 240 is modified (methionine sulfoxide). Repeat 10 spans residues 241-264; it reads PVMESLKASFLSSIDQASKQLSAQ.

This sequence belongs to the apolipoprotein A1/A4/E family. As to quaternary structure, homodimer. Interacts with APOA1BP and CLU. Component of a sperm activating protein complex (SPAP), consisting of APOA1, an immunoglobulin heavy chain, an immunoglobulin light chain and albumin. Interacts with NDRG1. Interacts with SCGB3A2. Interacts with NAXE and YJEFN3. Glycosylated. In terms of processing, palmitoylated. Post-translationally, phosphorylation sites are present in the extracellular medium. As to expression, major protein of plasma HDL, also found in chylomicrons.

It is found in the secreted. Participates in the reverse transport of cholesterol from tissues to the liver for excretion by promoting cholesterol efflux from tissues and by acting as a cofactor for the lecithin cholesterol acyltransferase (LCAT). As part of the SPAP complex, activates spermatozoa motility. The chain is Apolipoprotein A-I (Apoa1) from Heterocephalus glaber (Naked mole rat).